Consider the following 154-residue polypeptide: Small ribosomal subunit protein uS11c (154 aa).

Belongs to the universal ribosomal protein uS11 family. Part of the 30S ribosomal subunit.

It localises to the plastid. The sequence is that of Small ribosomal subunit protein uS11c from Helicosporidium sp. subsp. Simulium jonesii (Green alga).